The chain runs to 274 residues: Shikimate dehydrogenase (NADP(+)) (274 aa).

Shikimate is bound by residues 14–16 (SQS) and T61. Catalysis depends on K65, which acts as the Proton acceptor. Residues N86 and D102 each coordinate shikimate. NADP(+) contacts are provided by residues 128–132 (GAGGA), 151–156 (NRTVEK), and L215. Y217 is a shikimate binding site. Residue G239 coordinates NADP(+).

It belongs to the shikimate dehydrogenase family. In terms of assembly, homodimer.

It catalyses the reaction shikimate + NADP(+) = 3-dehydroshikimate + NADPH + H(+). It participates in metabolic intermediate biosynthesis; chorismate biosynthesis; chorismate from D-erythrose 4-phosphate and phosphoenolpyruvate: step 4/7. Its function is as follows. Involved in the biosynthesis of the chorismate, which leads to the biosynthesis of aromatic amino acids. Catalyzes the reversible NADPH linked reduction of 3-dehydroshikimate (DHSA) to yield shikimate (SA). The sequence is that of Shikimate dehydrogenase (NADP(+)) from Proteus mirabilis (strain HI4320).